A 230-amino-acid polypeptide reads, in one-letter code: PsbP-like protein 1, chloroplastic (230 aa).

Belongs to the PsbP family.

It is found in the plastid. Its subcellular location is the chloroplast thylakoid lumen. In terms of biological role, required for efficient repair of photodamaged PSII, but not tightly associated with the complex. This chain is PsbP-like protein 1, chloroplastic (PPL1), found in Arabidopsis thaliana (Mouse-ear cress).